We begin with the raw amino-acid sequence, 206 residues long: Small ribosomal subunit protein uS4 (206 aa).

Residues 98-155 (TRLDNVVYRLGWALSRDQARQLVSHGKIAVNGKRVNIPSYNLKPGDVVELLDKDLIPV) enclose the S4 RNA-binding domain.

This sequence belongs to the universal ribosomal protein uS4 family. As to quaternary structure, part of the 30S ribosomal subunit. Contacts protein S5. The interaction surface between S4 and S5 is involved in control of translational fidelity.

One of the primary rRNA binding proteins, it binds directly to 16S rRNA where it nucleates assembly of the body of the 30S subunit. Its function is as follows. With S5 and S12 plays an important role in translational accuracy. This is Small ribosomal subunit protein uS4 from Dictyoglomus thermophilum (strain ATCC 35947 / DSM 3960 / H-6-12).